Here is a 154-residue protein sequence, read N- to C-terminus: uncharacterized protein (154 aa).

Residues H47, H127, and H131 each coordinate a divalent metal cation. At Y150 the chain carries Phosphotyrosine.

This sequence belongs to the DinB family. In terms of assembly, homodimer.

This is an uncharacterized protein from Bacillus subtilis (strain 168).